The following is a 309-amino-acid chain: uncharacterized protein (309 aa).

The protein to S.pombe SpAC14C4.04.

This is an uncharacterized protein from Schizosaccharomyces pombe (strain 972 / ATCC 24843) (Fission yeast).